The primary structure comprises 599 residues: Bile salt-activated lipase (599 aa).

A signal peptide spans 1–20 (MGRLEVLFLGLTCCLAAACA). C84 and C100 form a disulfide bridge. An N-linked (GlcNAc...) asparagine glycan is attached at N207. S214 acts as the Acyl-ester intermediate in catalysis. A disulfide bond links C266 and C277. N-linked (GlcNAc...) asparagine glycosylation occurs at N325. Residues D340 and H455 each act as charge relay system in the active site. The segment at 553–599 (TGDQDTLTPPEDDSEVAPDPPSDDSQVVPVPPTDDSVEAQMPATIGF) is disordered. 3 repeat units span residues 559–569 (LTPPEDDSEVA), 570–580 (PDPPSDDSQVV), and 581–588 (PVPPTDDS). Residues 559-588 (LTPPEDDSEVAPDPPSDDSQVVPVPPTDDS) are 4 X 11 AA tandem repeats, O-glycosylated region.

It belongs to the type-B carboxylesterase/lipase family. In terms of assembly, interacts with CLC. EXpressed by eosinophils.

The protein localises to the secreted. It catalyses the reaction a triacylglycerol + H2O = a diacylglycerol + a fatty acid + H(+). It carries out the reaction 1,2,3-tri-(9Z-octadecenoyl)-glycerol + H2O = di-(9Z)-octadecenoylglycerol + (9Z)-octadecenoate + H(+). The catalysed reaction is 1,2,3-trioctanoylglycerol + H2O = dioctanoylglycerol + octanoate + H(+). The enzyme catalyses a sterol ester + H2O = a sterol + a fatty acid + H(+). It catalyses the reaction an acetyl ester + H2O = an aliphatic alcohol + acetate + H(+). It carries out the reaction a butanoate ester + H2O = an aliphatic alcohol + butanoate + H(+). The catalysed reaction is 9-hexadecanoyloxy-octadecanoate + H2O = 9-hydroxy-octadecanoate + hexadecanoate + H(+). The enzyme catalyses 9-(9Z-octadecenoyloxy)-octadecanoate + H2O = 9-hydroxy-octadecanoate + (9Z)-octadecenoate + H(+). It catalyses the reaction cholesteryl (9Z-octadecenoate) + H2O = cholesterol + (9Z)-octadecenoate + H(+). It carries out the reaction 1-hexadecanoyl-sn-glycero-3-phosphocholine + H2O = sn-glycerol 3-phosphocholine + hexadecanoate + H(+). The catalysed reaction is 12-hexadecanoyloxy-octadecanoate + H2O = 12-hydroxyoctadecanoate + hexadecanoate + H(+). The enzyme catalyses 12-(9Z-octadecenoyloxy)-octadecanoate + H2O = 12-hydroxyoctadecanoate + (9Z)-octadecenoate + H(+). It catalyses the reaction 13-(9Z-octadecenoyloxy)-octadecanoate + H2O = 13-hydroxy-octadecanoate + (9Z)-octadecenoate + H(+). It carries out the reaction 9-(9Z-hexadecenoyloxy)-octadecanoate + H2O = (9Z)-hexadecenoate + 9-hydroxy-octadecanoate + H(+). The catalysed reaction is 12-(9Z-hexadecenoyloxy)-octadecanoate + H2O = 12-hydroxyoctadecanoate + (9Z)-hexadecenoate + H(+). The enzyme catalyses 13-(9Z-hexadecenoyloxy)-octadecanoate + H2O = 13-hydroxy-octadecanoate + (9Z)-hexadecenoate + H(+). It catalyses the reaction 12-octadecanoyloxy-octadecanoate + H2O = 12-hydroxyoctadecanoate + octadecanoate + H(+). It carries out the reaction 13-octadecanoyloxy-octadecanoate + H2O = 13-hydroxy-octadecanoate + octadecanoate + H(+). The catalysed reaction is 5-(9Z-hexadecenoyloxy)-octadecanoate + H2O = 5-hydroxy-octadecanoate + (9Z)-hexadecenoate + H(+). The enzyme catalyses 9-octadecanoyloxy-octadecanoate + H2O = 9-hydroxy-octadecanoate + octadecanoate + H(+). With respect to regulation, activated by bile salts such as sodium taurocholate. Its function is as follows. Catalyzes the hydrolysis of a wide range of substrates including cholesteryl esters, phospholipids, lysophospholipids, di- and tri-acylglycerols, and fatty acid esters of hydroxy fatty acids (FAHFAs). Preferentially hydrolyzes FAHFAs with the ester bond further away from the carboxylate. Unsaturated FAHFAs are hydrolyzed more quickly than saturated FAHFAs. Has an essential role in the complete digestion of dietary lipids and their intestinal absorption, along with the absorption of fat-soluble vitamins. This chain is Bile salt-activated lipase (Cel), found in Mus musculus (Mouse).